The sequence spans 449 residues: 3-phosphoshikimate 1-carboxyvinyltransferase (449 aa).

The interval 1–30 (MSHDSSPQPLTAAPGAPLRGRLRPPGDKSI) is disordered. Residues Lys-28, Ser-29, and Arg-33 each coordinate 3-phosphoshikimate. Residue Lys-28 coordinates phosphoenolpyruvate. Phosphoenolpyruvate-binding residues include Gly-101 and Arg-129. Positions 175, 177, 330, and 357 each coordinate 3-phosphoshikimate. Gln-177 is a phosphoenolpyruvate binding site. Asp-330 serves as the catalytic Proton acceptor. Residues Arg-361 and Arg-405 each contribute to the phosphoenolpyruvate site.

This sequence belongs to the EPSP synthase family. Monomer.

The protein resides in the cytoplasm. It carries out the reaction 3-phosphoshikimate + phosphoenolpyruvate = 5-O-(1-carboxyvinyl)-3-phosphoshikimate + phosphate. The protein operates within metabolic intermediate biosynthesis; chorismate biosynthesis; chorismate from D-erythrose 4-phosphate and phosphoenolpyruvate: step 6/7. Functionally, catalyzes the transfer of the enolpyruvyl moiety of phosphoenolpyruvate (PEP) to the 5-hydroxyl of shikimate-3-phosphate (S3P) to produce enolpyruvyl shikimate-3-phosphate and inorganic phosphate. This is 3-phosphoshikimate 1-carboxyvinyltransferase from Methylobacterium radiotolerans (strain ATCC 27329 / DSM 1819 / JCM 2831 / NBRC 15690 / NCIMB 10815 / 0-1).